Consider the following 150-residue polypeptide: Nascent polypeptide-associated complex subunit beta (150 aa).

2 disordered regions span residues 1–45 (MADV…LQQS) and 123–150 (YQNM…NKVE). Residues 23–32 (TPRRKVKRAP) are compositionally biased toward basic residues. In terms of domain architecture, NAC-A/B spans 36-101 (GADDKKLQQS…GEDKELTELV (66 aa)).

It belongs to the NAC-beta family. In terms of assembly, part of the nascent polypeptide-associated complex (NAC), consisting of EGD2 and EGD1. NAC associates with ribosomes via EGD1.

Its subcellular location is the cytoplasm. The protein resides in the nucleus. Functionally, component of the nascent polypeptide-associated complex (NAC), a dynamic component of the ribosomal exit tunnel, protecting the emerging polypeptides from interaction with other cytoplasmic proteins to ensure appropriate nascent protein targeting. The NAC complex also promotes mitochondrial protein import by enhancing productive ribosome interactions with the outer mitochondrial membrane and blocks the inappropriate interaction of ribosomes translating non-secretory nascent polypeptides with translocation sites in the membrane of the endoplasmic reticulum. EGD1 may act as a transcription factor that exert a negative effect on the expression of several genes that are transcribed by RNA polymerase II. The chain is Nascent polypeptide-associated complex subunit beta (EGD1) from Chaetomium globosum (strain ATCC 6205 / CBS 148.51 / DSM 1962 / NBRC 6347 / NRRL 1970) (Soil fungus).